A 63-amino-acid polypeptide reads, in one-letter code: Large ribosomal subunit protein uL30 (63 aa).

This sequence belongs to the universal ribosomal protein uL30 family. Part of the 50S ribosomal subunit.

The protein is Large ribosomal subunit protein uL30 of Rickettsia massiliae (strain Mtu5).